The following is a 349-amino-acid chain: Protein arginine N-methyltransferase 6 (349 aa).

One can recognise an SAM-dependent MTase PRMT-type domain in the interval 17–324 (DYMYFDSYSD…EENSRHICIR (308 aa)). The S-adenosyl-L-methionine site is built by H30, R39, G63, E85, and E114. Active-site residues include E128 and E137.

Belongs to the class I-like SAM-binding methyltransferase superfamily. Protein arginine N-methyltransferase family. PRMT6 subfamily.

It is found in the nucleus. The enzyme catalyses L-arginyl-[protein] + 2 S-adenosyl-L-methionine = N(omega),N(omega)-dimethyl-L-arginyl-[protein] + 2 S-adenosyl-L-homocysteine + 2 H(+). Functionally, arginine methyltransferase that can catalyze the formation of both omega-N monomethylarginine (MMA) and asymmetrical dimethylarginine (aDMA), with a strong preference for the formation of aDMA. Preferentially methylates arginyl residues present in a glycine and arginine-rich domain and displays preference for monomethylated substrates. Specifically mediates the asymmetric dimethylation of histone H3 'Arg-2' to form H3R2me2a. H3R2me2a represents a specific tag for epigenetic transcriptional repression and is mutually exclusive with methylation on histone H3 'Lys-4' (H3K4me2 and H3K4me3). Acts as a transcriptional repressor of various genes such as HOXA2, THBS1 and TP53. Repression of TP53 blocks cellular senescence. Also methylates histone H2A and H4 'Arg-3' (H2AR3me and H4R3me, respectively). Acts as a regulator of DNA base excision during DNA repair by mediating the methylation of DNA polymerase beta (POLB), leading to the stimulation of its polymerase activity by enhancing DNA binding and processivity. Methylates HMGA1. Regulates alternative splicing events. Acts as a transcriptional coactivator of a number of steroid hormone receptors including ESR1, ESR2, PGR and NR3C1. This Danio rerio (Zebrafish) protein is Protein arginine N-methyltransferase 6 (prmt6).